We begin with the raw amino-acid sequence, 144 residues long: Benzoylsuccinyl-CoA thiolase subunit BbsA (144 aa).

Zn(2+) is bound by residues C40, C43, C54, and C57.

Belongs to the BbsA family. Heterotetramer composed of two BbsA subunits and two BbsB subunits. BbsA forms homodimeric subcomplexes. Both BbsA and BbsB are essential for enzymatic activity.

It carries out the reaction (S)-2-benzoylsuccinyl-CoA + CoA = benzoyl-CoA + succinyl-CoA. It functions in the pathway xenobiotic degradation; toluene degradation. Functionally, component of the BbsAB thiolase complex, which catalyzes the thiolytic cleavage of (S)-2-benzoylsuccinyl-CoA to succinyl-CoA and benzoyl-CoA, the final step of anaerobic toluene metabolism. The BbsA subunit critically contributes to an induced-fit process for productive binding of a CoA substrate into the active site of BbsB. The polypeptide is Benzoylsuccinyl-CoA thiolase subunit BbsA (Thauera aromatica).